Consider the following 523-residue polypeptide: Cytoplasmic dynein 1 light intermediate chain 1 (523 aa).

The segment at 1–45 (MAAVGRVGSFGSSPPGLASTYASGPLANELASGSGGPAAGDDEDG) is disordered. 74 to 81 (GEDGAGKT) lines the ATP pocket. Phosphoserine is present on Ser-207. The residue at position 213 (Thr-213) is a Phosphothreonine. 2 disordered regions span residues 387-434 (PPTA…DPNM) and 457-523 (GSPG…GEAS). Residues Ser-398 and Ser-405 each carry the phosphoserine modification. Thr-408 bears the Phosphothreonine mark. Residues Ser-412, Ser-419, Ser-421, and Ser-427 each carry the phosphoserine modification. The segment covering 412 to 421 (SVSSNVASVS) has biased composition (low complexity). Gly residues predominate over residues 458 to 473 (SPGGPGVGGSPGGGAA). Positions 474–483 (GASTSLPPSA) are enriched in low complexity. Phosphoserine occurs at positions 486 and 510. Phosphothreonine occurs at positions 512 and 513. Ser-516 is modified (phosphoserine).

This sequence belongs to the dynein light intermediate chain family. Homodimer. The cytoplasmic dynein 1 complex consists of two catalytic heavy chains (HCs) and a number of non-catalytic subunits presented by intermediate chains (ICs), light intermediate chains (LICs) and light chains (LCs); the composition seems to vary in respect to the IC, LIC and LC composition. The heavy chain homodimer serves as a scaffold for the probable homodimeric assembly of the respective non-catalytic subunits. The ICs and LICs bind directly to the HC dimer and the LCs assemble on the IC dimer. Self-associates. Interacts with DYNC1H1; DYNC1LI1 and DYNC1LI2 bind mutually exclusive to DYNC1H1. Interacts with PCNT. Forms a complex with RAB11FIP3 and RAB11A1; the interaction between DYNC1LI1 and RAB11FIP3 is direct and induces DYNC1LI1 localization onto endosomal membrane; the complex regulates endocytic trafficking. Interacts with RUFY3. In terms of processing, phosphorylated during mitosis but not in interphase.

Its subcellular location is the cytoplasm. The protein localises to the chromosome. It localises to the centromere. It is found in the kinetochore. The protein resides in the cytoskeleton. Its subcellular location is the spindle pole. The protein localises to the recycling endosome membrane. Acts as one of several non-catalytic accessory components of the cytoplasmic dynein 1 complex that are thought to be involved in linking dynein to cargos and to adapter proteins that regulate dynein function. Cytoplasmic dynein 1 acts as a motor for the intracellular retrograde motility of vesicles and organelles along microtubules. May play a role in binding dynein to membranous organelles or chromosomes. Probably involved in the microtubule-dependent transport of pericentrin. Is required for progress through the spindle assembly checkpoint. The phosphorylated form appears to be involved in the selective removal of MAD1L1 and MAD1L2 but not BUB1B from kinetochores. Forms a functional Rab11/RAB11FIP3/dynein complex onto endosomal membrane that regulates the movement of peripheral sorting endosomes (SE) along microtubule tracks toward the microtubule organizing center/centrosome, generating the endosomal recycling compartment (ERC). The chain is Cytoplasmic dynein 1 light intermediate chain 1 (Dync1li1) from Rattus norvegicus (Rat).